Reading from the N-terminus, the 518-residue chain is Chromosomal replication initiator protein DnaA (518 aa).

Residues Met1–Ala73 are domain I, interacts with DnaA modulators. The domain II stretch occupies residues Ala73–Thr180. Residues His144–Thr180 are disordered. Positions Ala164–Tyr177 are enriched in basic and acidic residues. A domain III, AAA+ region region spans residues Asn181–Ser397. 4 residues coordinate ATP: Gly225, Gly227, Lys228, and Thr229. The interval Arg398–Asn518 is domain IV, binds dsDNA.

Belongs to the DnaA family. As to quaternary structure, oligomerizes as a right-handed, spiral filament on DNA at oriC.

The protein resides in the cytoplasm. Plays an essential role in the initiation and regulation of chromosomal replication. ATP-DnaA binds to the origin of replication (oriC) to initiate formation of the DNA replication initiation complex once per cell cycle. Binds the DnaA box (a 9 base pair repeat at the origin) and separates the double-stranded (ds)DNA. Forms a right-handed helical filament on oriC DNA; dsDNA binds to the exterior of the filament while single-stranded (ss)DNA is stabiized in the filament's interior. The ATP-DnaA-oriC complex binds and stabilizes one strand of the AT-rich DNA unwinding element (DUE), permitting loading of DNA polymerase. After initiation quickly degrades to an ADP-DnaA complex that is not apt for DNA replication. Binds acidic phospholipids. The protein is Chromosomal replication initiator protein DnaA of Neisseria gonorrhoeae (strain ATCC 700825 / FA 1090).